Consider the following 318-residue polypeptide: Trans-prenyltransferase (318 aa).

A helical membrane pass occupies residues 1-21 (MLHLIYISIIVVLIIILISYT). 3 residues coordinate isopentenyl diphosphate: lysine 85, arginine 88, and histidine 122. The Mg(2+) site is built by aspartate 129 and aspartate 135. Arginine 140 contributes to the dimethylallyl diphosphate binding site. Arginine 141 is a binding site for isopentenyl diphosphate. Dimethylallyl diphosphate contacts are provided by lysine 216, threonine 217, and glutamine 254.

This sequence belongs to the FPP/GGPP synthase family. Asfivirus trans-prenyltransferase subfamily. The cofactor is Mg(2+).

It localises to the host endoplasmic reticulum. The protein localises to the host membrane. The catalysed reaction is isopentenyl diphosphate + dimethylallyl diphosphate = (2E)-geranyl diphosphate + diphosphate. The enzyme catalyses isopentenyl diphosphate + (2E)-geranyl diphosphate = (2E,6E)-farnesyl diphosphate + diphosphate. It catalyses the reaction isopentenyl diphosphate + (2E,6E)-farnesyl diphosphate = (2E,6E,10E)-geranylgeranyl diphosphate + diphosphate. It carries out the reaction isopentenyl diphosphate + (2E,6E,10E)-geranylgeranyl diphosphate = (2E,6E,10E,14E)-geranylfarnesyl diphosphate + diphosphate. It functions in the pathway isoprenoid biosynthesis; farnesyl diphosphate biosynthesis; farnesyl diphosphate from geranyl diphosphate and isopentenyl diphosphate: step 1/1. The protein operates within isoprenoid biosynthesis; geranyl diphosphate biosynthesis; geranyl diphosphate from dimethylallyl diphosphate and isopentenyl diphosphate: step 1/1. It participates in isoprenoid biosynthesis; geranylgeranyl diphosphate biosynthesis; geranylgeranyl diphosphate from farnesyl diphosphate and isopentenyl diphosphate: step 1/1. Trans-prenyltransferase that catalyzes the sequential condensation of isopentenyl diphosphate (IPP) with different allylic diphosphates, such as dimethylallyl diphosphate (DMAPP), geranyl diphosphate (GPP), farnesyl diphosphate (FPP) and geranylgeranyl diphosphate (GGPP), farnesyl diphosphate being the best allylic substrate. The polypeptide is Trans-prenyltransferase (African swine fever virus (isolate Tick/South Africa/Pretoriuskop Pr4/1996) (ASFV)).